We begin with the raw amino-acid sequence, 142 residues long: MRALLDVNVLLALLDRDHVDHERARAWITGQIERGWASCAITQNGFVRVISQPRYPSPISVAHAIDLLARATHTRYHEFWSCTVSILDSKVIDRSRLHSPKQVTDAYLLALAVAHDGRFVTFDQSIALTAVPGATKQHLATL.

The region spanning 4-126 (LLDVNVLLAL…GRFVTFDQSI (123 aa)) is the PINc domain. Mg(2+) is bound by residues D6 and D105.

The protein belongs to the PINc/VapC protein family. The cofactor is Mg(2+).

In terms of biological role, toxic component of a type II toxin-antitoxin (TA) system. An RNase. Its cognate antitoxin is VapB44. This is Ribonuclease VapC44 from Mycobacterium tuberculosis (strain CDC 1551 / Oshkosh).